We begin with the raw amino-acid sequence, 150 residues long: Nucleoside diphosphate kinase (150 aa).

ATP is bound by residues Lys9, Phe57, Arg85, Thr91, Arg102, and Asn112. The active-site Pros-phosphohistidine intermediate is the His115.

Belongs to the NDK family. As to quaternary structure, homotetramer. Mg(2+) is required as a cofactor.

The protein localises to the cytoplasm. The catalysed reaction is a 2'-deoxyribonucleoside 5'-diphosphate + ATP = a 2'-deoxyribonucleoside 5'-triphosphate + ADP. The enzyme catalyses a ribonucleoside 5'-diphosphate + ATP = a ribonucleoside 5'-triphosphate + ADP. Functionally, major role in the synthesis of nucleoside triphosphates other than ATP. The ATP gamma phosphate is transferred to the NDP beta phosphate via a ping-pong mechanism, using a phosphorylated active-site intermediate. The protein is Nucleoside diphosphate kinase of Thermosynechococcus vestitus (strain NIES-2133 / IAM M-273 / BP-1).